Here is a 119-residue protein sequence, read N- to C-terminus: uncharacterized protein (119 aa).

This is an uncharacterized protein from Dactylococcopsis salina (Myxobaktron salinum).